The chain runs to 327 residues: MFNDIPVFDYEDIQLIPNKCIISSRSQADTSVKLGNYTFKLPVIPANMQTIIDEEVAETLACEGYFYIMHRFNEEERKPFIKRMHDKGLIASISVGVKDYEYDFVTSLKEDAPEFITIDIAHGHSNSVIEMIQHIKQELPETFVIAGNVGTPEAVRELENAGADATKVGIGPGKVCITKVKTGFGTGGWQLAALRWCSKAARKPIIADGGIRTHGDIAKSIRFGASMVMIGSLFAGHLESPGKLVEVEGQQFKEYYGSASEYQKGEHKNVEGKKILLPVKGRLEDTLTEMQQDLQSSISYAGGKELDSLRHVDYVIVKNSIWNGDSI.

The active-site Thioimidate intermediate is the Cys176. Residue 205-228 participates in NADP(+) binding; that stretch reads IIADGGIRTHGDIAKSIRFGASMV.

Belongs to the IMPDH/GMPR family. GuaC type 2 subfamily.

The catalysed reaction is IMP + NH4(+) + NADP(+) = GMP + NADPH + 2 H(+). Its function is as follows. Catalyzes the irreversible NADPH-dependent deamination of GMP to IMP. It functions in the conversion of nucleobase, nucleoside and nucleotide derivatives of G to A nucleotides, and in maintaining the intracellular balance of A and G nucleotides. This Streptococcus agalactiae serotype V (strain ATCC BAA-611 / 2603 V/R) protein is GMP reductase.